A 346-amino-acid polypeptide reads, in one-letter code: Protein RecA (346 aa).

Residue 67–74 (GPESSGKT) participates in ATP binding.

Belongs to the RecA family.

Its subcellular location is the cytoplasm. In terms of biological role, can catalyze the hydrolysis of ATP in the presence of single-stranded DNA, the ATP-dependent uptake of single-stranded DNA by duplex DNA, and the ATP-dependent hybridization of homologous single-stranded DNAs. It interacts with LexA causing its activation and leading to its autocatalytic cleavage. This chain is Protein RecA, found in Mycobacterium marinum (strain ATCC BAA-535 / M).